A 313-amino-acid chain; its full sequence is Porphobilinogen deaminase (313 aa).

Residue C241 is modified to S-(dipyrrolylmethanemethyl)cysteine.

Belongs to the HMBS family. As to quaternary structure, monomer. Dipyrromethane is required as a cofactor.

The enzyme catalyses 4 porphobilinogen + H2O = hydroxymethylbilane + 4 NH4(+). It participates in porphyrin-containing compound metabolism; protoporphyrin-IX biosynthesis; coproporphyrinogen-III from 5-aminolevulinate: step 2/4. Its pathway is porphyrin-containing compound metabolism; chlorophyll biosynthesis. Functionally, tetrapolymerization of the monopyrrole PBG into the hydroxymethylbilane pre-uroporphyrinogen in several discrete steps. The chain is Porphobilinogen deaminase from Chlorobium phaeobacteroides (strain DSM 266 / SMG 266 / 2430).